A 149-amino-acid chain; its full sequence is Large ribosomal subunit protein bL9 (149 aa).

The protein belongs to the bacterial ribosomal protein bL9 family.

Its function is as follows. Binds to the 23S rRNA. This Anaeromyxobacter dehalogenans (strain 2CP-C) protein is Large ribosomal subunit protein bL9.